The chain runs to 512 residues: Multidrug resistance protein 3 (512 aa).

14 helical membrane-spanning segments follow: residues 13 to 33 (FVVL…TIVA), 48 to 68 (KFAW…PIYG), 79 to 99 (FFLF…IAQT), 109 to 129 (IQGI…FDLF), 139 to 159 (GMFG…GAII), 163 to 183 (ISWH…LFFI), 200 to 220 (WGGA…LELG), 228 to 248 (SIQI…FFIV), 272 to 292 (ILAF…PIFV), 304 to 324 (GFIL…GGIF), 333 to 353 (LMLI…NMTP), 358 to 378 (VWLT…FSLL), 399 to 421 (SFLR…TNVF), and 475 to 495 (ITYV…TILF).

The protein belongs to the major facilitator superfamily. EmrB family.

It is found in the cell membrane. Its function is as follows. Confers resistance to puromycin, tosufloxacin and norfloxacin. The protein is Multidrug resistance protein 3 (bmr3) of Bacillus subtilis (strain 168).